Here is a 61-residue protein sequence, read N- to C-terminus: Small ribosomal subunit protein uS14 (61 aa).

4 residues coordinate Zn(2+): C24, C27, C40, and C43.

It belongs to the universal ribosomal protein uS14 family. Zinc-binding uS14 subfamily. As to quaternary structure, part of the 30S ribosomal subunit. Contacts proteins S3 and S10. Requires Zn(2+) as cofactor.

Its function is as follows. Binds 16S rRNA, required for the assembly of 30S particles and may also be responsible for determining the conformation of the 16S rRNA at the A site. This is Small ribosomal subunit protein uS14 from Mesoplasma florum (strain ATCC 33453 / NBRC 100688 / NCTC 11704 / L1) (Acholeplasma florum).